The chain runs to 116 residues: Large ribosomal subunit protein bL17 (116 aa).

The protein belongs to the bacterial ribosomal protein bL17 family. As to quaternary structure, part of the 50S ribosomal subunit. Contacts protein L32.

This chain is Large ribosomal subunit protein bL17, found in Synechococcus sp. (strain WH7803).